Reading from the N-terminus, the 409-residue chain is 23S rRNA (uracil(747)-C(5))-methyltransferase (409 aa).

[4Fe-4S] cluster-binding residues include C61, C67, C70, and C137. Residues Q251, Y277, E298, and D339 each coordinate S-adenosyl-L-methionine. C365 (nucleophile) is an active-site residue.

Belongs to the class I-like SAM-binding methyltransferase superfamily. RNA M5U methyltransferase family.

The catalysed reaction is uridine(747) in 23S rRNA + S-adenosyl-L-methionine = 5-methyluridine(747) in 23S rRNA + S-adenosyl-L-homocysteine + H(+). In terms of biological role, catalyzes the formation of 5-methyl-uridine at position equivalent to 747 (m5U747) in 23S rRNA. The protein is 23S rRNA (uracil(747)-C(5))-methyltransferase of Pyrococcus furiosus (strain ATCC 43587 / DSM 3638 / JCM 8422 / Vc1).